The sequence spans 325 residues: Pyruvate dehydrogenase E1 component subunit beta (325 aa).

Residue Glu-59 participates in thiamine diphosphate binding.

In terms of assembly, heterodimer of an alpha and a beta chain. Requires thiamine diphosphate as cofactor.

The catalysed reaction is N(6)-[(R)-lipoyl]-L-lysyl-[protein] + pyruvate + H(+) = N(6)-[(R)-S(8)-acetyldihydrolipoyl]-L-lysyl-[protein] + CO2. Its function is as follows. The pyruvate dehydrogenase complex catalyzes the overall conversion of pyruvate to acetyl-CoA and CO(2). It contains multiple copies of three enzymatic components: pyruvate dehydrogenase (E1), dihydrolipoamide acetyltransferase (E2) and lipoamide dehydrogenase (E3). In Rickettsia bellii (strain RML369-C), this protein is Pyruvate dehydrogenase E1 component subunit beta (pdhB).